Reading from the N-terminus, the 454-residue chain is Alkaline extracellular protease (454 aa).

A signal peptide spans 1 to 15; it reads MKLATAFTILTAVLA. A propeptide spanning residues 16–157 is cleaved from the precursor; that stretch reads APLAAPAPAP…EIPASSNAKR (142 aa). In terms of domain architecture, Inhibitor I9 spans 68-146; it reads FIVVFDSSAT…TVEPDTIVSL (79 aa). A glycan (N-linked (GlcNAc...) asparagine) is linked at Asn-123. A Peptidase S8 domain is found at 166–454; that stretch reads QWGLSRISHK…NAVAYNGVGI (289 aa). Active-site charge relay system residues include Asp-200, His-231, and Ser-397.

This sequence belongs to the peptidase S8 family. Post-translationally, the pro-region is removed through cleavage by XPR6 after Lys156-Arg157, which yields mature active XPR2. The 10 consecutive -X-Ala- or -X-Pro- dipeptides located over 100 amino acids upstream of the N-terminal of mature XPR2 are subject to dipeptidyl aminopeptidase (DPAPase)-processing. DPAPase activity is not necessary for XPR6 cleavage and for secretion of mature active XPR2. In terms of processing, N-glycosylated. Glycosylation within the pro-region has no effect on secretion and maturation at 18 degrees Celsius, but is required for secretion at 28 degrees Celsius.

It is found in the secreted. It catalyses the reaction Hydrolysis of proteins with broad specificity for peptide bonds, and a preference for a large uncharged residue in P1. Hydrolyzes peptide amides.. The protease activity is completely inhibited by the serine inhibitor PMSF but is not affected by thiol group inhibitors and in the presence of dithiothreitol. In the presence of high concentrations of o-phenanthroline the protease activity is only partially inhibited. The pro-region plays an inhibitory role and may provide a mechanism for preventing premature activation in the secretory pathway. Major secreted protein that belongs to the subtilisin family serine proteases. The sequence is that of Alkaline extracellular protease from Yarrowia lipolytica (strain CLIB 122 / E 150) (Yeast).